Consider the following 370-residue polypeptide: MDLFGDLPEPERSPRPAAGSGGPLLFDDLPPASSGDSGSLDTSLSEEVKNEGKGAKRKASDEEKNGSEELVEKKVCKASSVIFSLKGYVAERKGEREEMQDAHVILNDITAECQPPSALVTRVSYFAVFDGHGGIRASKFAAQNLHQNLIRKFPKGDGISVEKTVKRCLLDTFKHTDEEFLKQASSQKPAWKDGSTATCVLAVDNTLYIANLGDSRAILCRYNEESQKHAALSLSKEHNPTQYEERMRIQKAGGNVRDGRVLGVLEVSRSIGDGQYKRCGVTSVPDIRRCQLTPNDRFILLACDGLFKVFTPEEAVNFILSCLEDEKIQRREGKPTVDARYEAACNRLANKAVQRGSADNVTVMVVRIGL.

Residue Met1 is modified to N-acetylmethionine. Residues 1–69 are disordered; sequence MDLFGDLPEP…SDEEKNGSEE (69 aa). At Ser13 the chain carries Phosphoserine. The segment covering 33–45 has biased composition (low complexity); that stretch reads SSGDSGSLDTSLS. A compositionally biased stretch (basic and acidic residues) spans 46-69; that stretch reads EEVKNEGKGAKRKASDEEKNGSEE. The PPM-type phosphatase domain maps to 86–368; that stretch reads KGYVAERKGE…DNVTVMVVRI (283 aa). Mn(2+)-binding residues include Asp130 and Gly131. Lys188 bears the N6-acetyllysine mark. 2 residues coordinate Mn(2+): Asp304 and Asp359.

It belongs to the PP2C family. Interacts with ILK. Mg(2+) is required as a cofactor. Mn(2+) serves as cofactor.

The protein resides in the cytoplasm. It catalyses the reaction O-phospho-L-seryl-[protein] + H2O = L-seryl-[protein] + phosphate. The enzyme catalyses O-phospho-L-threonyl-[protein] + H2O = L-threonyl-[protein] + phosphate. In terms of biological role, protein phosphatase that may play a role in regulation of cell cycle progression via dephosphorylation of its substrates whose appropriate phosphorylation states might be crucial for cell proliferation. Selectively associates with integrin linked kinase (ILK), to modulate cell adhesion and growth factor signaling. Inhibits the ILK-GSK3B signaling axis and may play an important role in inhibiting oncogenic transformation. This chain is Integrin-linked kinase-associated serine/threonine phosphatase 2C (ILKAP), found in Bos taurus (Bovine).